We begin with the raw amino-acid sequence, 467 residues long: MLMSWSPEECRDQGEPQGDRYSLCAKLVEKPDRGSEEHLEPGLGPIIIRSASGPTLAFWQAVLVGDVGSVSRILSDSSTGLAPDSIFDTSDPERWRDYRFNIRALRLWSLTYEEELTTPLHVAASRGHTEVLELLLRRRAKPDSAPGGRTALHEACSAGHAACVRVLLVAGADPNTLDQDGKRPLHLCRGPGILECVELLLKFGAQVDGRTEDEEETPLHIAARLGHVELADLLLRWGACPDVRNSEGWTPLLAACDIRCQSPKDAEATTNRCFQLCRLLLSVGADADAANQDKQRPLHLACRHGHSAVVQLLLSCGVNANAMDYGGHTPLHCALLGPTTAVAHSPEHTVRDLLNHGAVRVWPGALPKVLDRWCMSPRTIEVLMNTYRVVQLPEEAKGLVPPEILQKYHGFYSSLFALVRQPRSLQHLCRCALRSHLEGCLPHALPRLPLPPRMLRFLQLDFEDLLY.

7 ANK repeats span residues 115-144, 147-176, 180-209, 214-243, 247-289, 293-322, and 326-361; these read ELTTPLHVAASRGHTEVLELLLRRRAKPDS, GGRTALHEACSAGHAACVRVLLVAGADPNT, DGKRPLHLCRGPGILECVELLLKFGAQVDG, EEETPLHIAARLGHVELADLLLRWGACPDV, EGWT…DADA, DKQRPLHLACRHGHSAVVQLLLSCGVNANA, and GGHTPLHCALLGPTTAVAHSPEHTVRDLLNHGAVRV. Residues 412–467 form the SOCS box domain; it reads YSSLFALVRQPRSLQHLCRCALRSHLEGCLPHALPRLPLPPRMLRFLQLDFEDLLY.

This sequence belongs to the ankyrin SOCS box (ASB) family.

The protein resides in the nucleus. It localises to the cytoplasm. It functions in the pathway protein modification; protein ubiquitination. May be a substrate-recognition component of a SCF-like ECS (Elongin-Cullin-SOCS-box protein) E3 ubiquitin-protein ligase complex which mediates the ubiquitination and subsequent proteasomal degradation of target proteins. The sequence is that of Ankyrin repeat and SOCS box protein 10 (Asb10) from Mus musculus (Mouse).